The primary structure comprises 88 residues: Putative membrane protein insertion efficiency factor (88 aa).

It belongs to the UPF0161 family.

It localises to the cell inner membrane. Functionally, could be involved in insertion of integral membrane proteins into the membrane. In Burkholderia vietnamiensis (strain G4 / LMG 22486) (Burkholderia cepacia (strain R1808)), this protein is Putative membrane protein insertion efficiency factor.